A 379-amino-acid chain; its full sequence is tRNA-specific 2-thiouridylase MnmA (379 aa).

ATP is bound by residues 16 to 23 (GLSGGVDS) and Met42. Residues 102–104 (NPD) form an interaction with target base in tRNA region. The Nucleophile role is filled by Cys107. The cysteines at positions 107 and 204 are disulfide-linked. Gly131 lines the ATP pocket. Residues 154 to 156 (KDQ) form an interaction with tRNA region. Cys204 (cysteine persulfide intermediate) is an active-site residue. Residues 316 to 317 (RY) are interaction with tRNA.

The protein belongs to the MnmA/TRMU family.

The protein resides in the cytoplasm. It catalyses the reaction S-sulfanyl-L-cysteinyl-[protein] + uridine(34) in tRNA + AH2 + ATP = 2-thiouridine(34) in tRNA + L-cysteinyl-[protein] + A + AMP + diphosphate + H(+). Catalyzes the 2-thiolation of uridine at the wobble position (U34) of tRNA, leading to the formation of s(2)U34. The sequence is that of tRNA-specific 2-thiouridylase MnmA from Hydrogenovibrio crunogenus (strain DSM 25203 / XCL-2) (Thiomicrospira crunogena).